We begin with the raw amino-acid sequence, 379 residues long: 2-dehydropantoate 2-reductase (379 aa).

NADP(+)-binding positions include 13-18 (GLGAMG) and N119. N119 is a binding site for substrate. K224 (proton donor) is an active-site residue. Residues N228, N232, and S316 each contribute to the substrate site. E328 contributes to the NADP(+) binding site.

The protein belongs to the ketopantoate reductase family.

It catalyses the reaction (R)-pantoate + NADP(+) = 2-dehydropantoate + NADPH + H(+). It participates in cofactor biosynthesis; (R)-pantothenate biosynthesis; (R)-pantoate from 3-methyl-2-oxobutanoate: step 2/2. Catalyzes the NADPH-dependent reduction of ketopantoate into pantoic acid. The chain is 2-dehydropantoate 2-reductase (PAN5) from Saccharomyces cerevisiae (strain ATCC 204508 / S288c) (Baker's yeast).